Here is a 185-residue protein sequence, read N- to C-terminus: Elongation factor P (185 aa).

It belongs to the elongation factor P family.

It localises to the cytoplasm. It functions in the pathway protein biosynthesis; polypeptide chain elongation. In terms of biological role, involved in peptide bond synthesis. Stimulates efficient translation and peptide-bond synthesis on native or reconstituted 70S ribosomes in vitro. Probably functions indirectly by altering the affinity of the ribosome for aminoacyl-tRNA, thus increasing their reactivity as acceptors for peptidyl transferase. The protein is Elongation factor P of Streptococcus equi subsp. zooepidemicus (strain MGCS10565).